The following is a 472-amino-acid chain: Ribosomal protein uS12 methylthiotransferase RimO (472 aa).

Residues 33–143 (NRIGFVSLGC…VLKHVHKYVP (111 aa)) form the MTTase N-terminal domain. [4Fe-4S] cluster-binding residues include cysteine 42, cysteine 78, cysteine 107, cysteine 175, cysteine 179, and cysteine 182. Positions 161–398 (LTPKHYAYLK…MEVQAEISAE (238 aa)) constitute a Radical SAM core domain. Residues 401–467 (ARFVGRTLDI…EHDLWAEVVD (67 aa)) form the TRAM domain.

Belongs to the methylthiotransferase family. RimO subfamily. [4Fe-4S] cluster is required as a cofactor.

It is found in the cytoplasm. The enzyme catalyses L-aspartate(89)-[ribosomal protein uS12]-hydrogen + (sulfur carrier)-SH + AH2 + 2 S-adenosyl-L-methionine = 3-methylsulfanyl-L-aspartate(89)-[ribosomal protein uS12]-hydrogen + (sulfur carrier)-H + 5'-deoxyadenosine + L-methionine + A + S-adenosyl-L-homocysteine + 2 H(+). Its function is as follows. Catalyzes the methylthiolation of an aspartic acid residue of ribosomal protein uS12. The polypeptide is Ribosomal protein uS12 methylthiotransferase RimO (Shewanella baltica (strain OS195)).